The following is a 732-amino-acid chain: Guanylate cyclase soluble subunit alpha-2 (732 aa).

Positions 1 to 58 are disordered; the sequence is MSRRKISSESFSSLGSDYLETSPEEEGECPLSRLCWNGSRSPPGPLEPSPAAAAAAAA. The segment covering 49-58 has biased composition (low complexity); the sequence is SPAAAAAAAA. Residues 521–648 enclose the Guanylate cyclase domain; that stretch reads TMLFSDIVGF…NNVTLASKFE (128 aa).

It belongs to the adenylyl cyclase class-4/guanylyl cyclase family. As to quaternary structure, heterodimer of an alpha and a beta chain. In terms of tissue distribution, isoform 1 is expressed in fetal brain, liver, colon, endothelium and testis. Isoform 2 is expressed only in liver, colon and endothelium.

It is found in the cytoplasm. It catalyses the reaction GTP = 3',5'-cyclic GMP + diphosphate. Its activity is regulated as follows. Activated by nitric oxide in the presence of magnesium or manganese ions. Its function is as follows. Has guanylyl cyclase on binding to the beta-1 subunit. Functionally, isoform 2 acts as a negative regulator of guanylyl cyclase activity as it forms non-functional heterodimers with the beta subunits. This is Guanylate cyclase soluble subunit alpha-2 (GUCY1A2) from Homo sapiens (Human).